Reading from the N-terminus, the 194-residue chain is Thymidine kinase (194 aa).

ATP is bound by residues 9 to 16 (GAMNSGKT) and 85 to 88 (DECQ). The active-site Proton acceptor is the Glu86. The Zn(2+) site is built by Cys143, Cys146, Cys180, and His183.

Belongs to the thymidine kinase family. In terms of assembly, homotetramer.

Its subcellular location is the cytoplasm. It catalyses the reaction thymidine + ATP = dTMP + ADP + H(+). This is Thymidine kinase from Enterococcus faecalis (strain ATCC 700802 / V583).